The chain runs to 965 residues: Vacuolar membrane protease (965 aa).

Residues 1–16 (MARPSLSPSNPLGFTP) lie on the Cytoplasmic side of the membrane. The chain crosses the membrane as a helical span at residues 17-37 (WPVTVITAVVYLALVVPLLVV). Over 38 to 387 (HHVVPSAPSS…SAFVVFELHT (350 aa)) the chain is Vacuolar. Asn-53 and Asn-119 each carry an N-linked (GlcNAc...) asparagine glycan. Residues His-171 and Asp-183 each contribute to the Zn(2+) site. Glu-217 (proton acceptor) is an active-site residue. Residues Glu-218, Glu-243, and His-316 each coordinate Zn(2+). The helical transmembrane segment at 388–408 (LFALSVTLLVVAPLVLLVTSI) threads the bilayer. Over 409 to 441 (ALARADKMYLFRSSASPEDSDGSEVVPLHGVRG) the chain is Cytoplasmic. Residues 442–462 (FFRFPFLLVIPTAVTVGLAYL) traverse the membrane as a helical segment. Topologically, residues 463-472 (VTKFNPYIIH) are vacuolar. A helical transmembrane segment spans residues 473 to 493 (SSEYAVWSMMISAWVFLAWFV). Residues 494 to 507 (SRVADFARPSAFHR) lie on the Cytoplasmic side of the membrane. The chain crosses the membrane as a helical span at residues 508-528 (VYTLTWLFLVEWVFLVISTVY). Residues 529–532 (ENQY) are Vacuolar-facing. Residues 533 to 553 (GLAGGYFVLFVFAGTFLATWI) form a helical membrane-spanning segment. At 554 to 661 (SYLELFALPR…WSIHLPKWVW (108 aa)) the chain is on the cytoplasmic side. The segment at 577 to 610 (RTSSHGSRLGTASGEDVEDGEDEDDDGTTAEATE) is disordered. A compositionally biased stretch (acidic residues) spans 591 to 604 (EDVEDGEDEDDDGT). A helical transmembrane segment spans residues 662 to 682 (VLQFLLTAPLVLIFVGPLALL). At 683–698 (LTSALRQTGQDGSPSL) the chain is on the vacuolar side. The chain crosses the membrane as a helical span at residues 699-719 (FIYIAVAALTTLLFIPLLPFI). Over 720 to 725 (HRYTHH) the chain is Cytoplasmic. A helical membrane pass occupies residues 726-746 (IPLFLLCVFAGTLIYNLVAFP). At 747 to 965 (FSPANRLKLF…LVEGSRRFEV (219 aa)) the chain is on the vacuolar side. Asn-793 and Asn-830 each carry an N-linked (GlcNAc...) asparagine glycan.

It belongs to the peptidase M28 family. It depends on Zn(2+) as a cofactor.

It localises to the vacuole membrane. Functionally, may be involved in vacuolar sorting and osmoregulation. This Aspergillus fumigatus (strain CBS 144.89 / FGSC A1163 / CEA10) (Neosartorya fumigata) protein is Vacuolar membrane protease.